We begin with the raw amino-acid sequence, 272 residues long: Undecaprenyl-diphosphatase (272 aa).

7 consecutive transmembrane segments (helical) span residues 42–62 (FGLS…VVFF), 92–112 (YLVL…EDFF), 120–140 (WVVV…EAVG), 149–169 (MGFA…VPGV), 194–214 (FLMS…EVLA), 224–244 (MFAV…RFFI), and 252–272 (LRAF…LLLL).

The protein belongs to the UppP family.

It localises to the cell membrane. It carries out the reaction di-trans,octa-cis-undecaprenyl diphosphate + H2O = di-trans,octa-cis-undecaprenyl phosphate + phosphate + H(+). Its function is as follows. Catalyzes the dephosphorylation of undecaprenyl diphosphate (UPP). Confers resistance to bacitracin. In Rubrobacter xylanophilus (strain DSM 9941 / JCM 11954 / NBRC 16129 / PRD-1), this protein is Undecaprenyl-diphosphatase.